The chain runs to 325 residues: Phosphate acyltransferase (325 aa).

Belongs to the PlsX family. In terms of assembly, homodimer. Probably interacts with PlsY.

It localises to the cytoplasm. It carries out the reaction a fatty acyl-[ACP] + phosphate = an acyl phosphate + holo-[ACP]. It functions in the pathway lipid metabolism; phospholipid metabolism. Catalyzes the reversible formation of acyl-phosphate (acyl-PO(4)) from acyl-[acyl-carrier-protein] (acyl-ACP). This enzyme utilizes acyl-ACP as fatty acyl donor, but not acyl-CoA. The sequence is that of Phosphate acyltransferase from Mycoplasmopsis pulmonis (strain UAB CTIP) (Mycoplasma pulmonis).